Here is a 196-residue protein sequence, read N- to C-terminus: Pyridoxal 5'-phosphate synthase subunit PdxT (196 aa).

Residue 47 to 49 coordinates L-glutamine; it reads GES. Cys-79 (nucleophile) is an active-site residue. L-glutamine-binding positions include Arg-106 and 134–135; that span reads IR. Catalysis depends on charge relay system residues His-170 and Glu-172.

This sequence belongs to the glutaminase PdxT/SNO family. In terms of assembly, in the presence of PdxS, forms a dodecamer of heterodimers. Only shows activity in the heterodimer.

It catalyses the reaction aldehydo-D-ribose 5-phosphate + D-glyceraldehyde 3-phosphate + L-glutamine = pyridoxal 5'-phosphate + L-glutamate + phosphate + 3 H2O + H(+). The catalysed reaction is L-glutamine + H2O = L-glutamate + NH4(+). The protein operates within cofactor biosynthesis; pyridoxal 5'-phosphate biosynthesis. Catalyzes the hydrolysis of glutamine to glutamate and ammonia as part of the biosynthesis of pyridoxal 5'-phosphate. The resulting ammonia molecule is channeled to the active site of PdxS. The chain is Pyridoxal 5'-phosphate synthase subunit PdxT from Bacillus cytotoxicus (strain DSM 22905 / CIP 110041 / 391-98 / NVH 391-98).